The following is a 528-amino-acid chain: Peptide chain release factor 3 (528 aa).

One can recognise a tr-type G domain in the interval 10 to 278; sequence DRRRTFGIIS…AFVQMAPPPH (269 aa). GTP contacts are provided by residues 19-26, 87-91, and 141-144; these read SHPDAGKT, DTPGH, and NKLD.

This sequence belongs to the TRAFAC class translation factor GTPase superfamily. Classic translation factor GTPase family. PrfC subfamily.

The protein localises to the cytoplasm. Functionally, increases the formation of ribosomal termination complexes and stimulates activities of RF-1 and RF-2. It binds guanine nucleotides and has strong preference for UGA stop codons. It may interact directly with the ribosome. The stimulation of RF-1 and RF-2 is significantly reduced by GTP and GDP, but not by GMP. This chain is Peptide chain release factor 3, found in Syntrophobacter fumaroxidans (strain DSM 10017 / MPOB).